The chain runs to 110 residues: Small ribosomal subunit protein uS10m (110 aa).

The protein belongs to the universal ribosomal protein uS10 family.

It is found in the mitochondrion. This chain is Small ribosomal subunit protein uS10m (RPS10), found in Pisum sativum (Garden pea).